Consider the following 72-residue polypeptide: Osmotically-inducible lipoprotein B (72 aa).

An N-terminal signal peptide occupies residues 1 to 23; that stretch reads MFVTSKKMTAAVLAITLAMSLSA. The N-palmitoyl cysteine moiety is linked to residue Cys-24. Cys-24 carries S-diacylglycerol cysteine lipidation.

It is found in the cell membrane. In terms of biological role, provides resistance to osmotic stress. May be important for stationary-phase survival. This Escherichia coli O157:H7 protein is Osmotically-inducible lipoprotein B (osmB).